The chain runs to 499 residues: Aspartyl/glutamyl-tRNA(Asn/Gln) amidotransferase subunit B (499 aa).

This sequence belongs to the GatB/GatE family. GatB subfamily. Heterotrimer of A, B and C subunits.

The enzyme catalyses L-glutamyl-tRNA(Gln) + L-glutamine + ATP + H2O = L-glutaminyl-tRNA(Gln) + L-glutamate + ADP + phosphate + H(+). It carries out the reaction L-aspartyl-tRNA(Asn) + L-glutamine + ATP + H2O = L-asparaginyl-tRNA(Asn) + L-glutamate + ADP + phosphate + 2 H(+). Allows the formation of correctly charged Asn-tRNA(Asn) or Gln-tRNA(Gln) through the transamidation of misacylated Asp-tRNA(Asn) or Glu-tRNA(Gln) in organisms which lack either or both of asparaginyl-tRNA or glutaminyl-tRNA synthetases. The reaction takes place in the presence of glutamine and ATP through an activated phospho-Asp-tRNA(Asn) or phospho-Glu-tRNA(Gln). In Bifidobacterium longum (strain DJO10A), this protein is Aspartyl/glutamyl-tRNA(Asn/Gln) amidotransferase subunit B.